The primary structure comprises 60 residues: Metallothionein (60 aa).

A beta region spans residues 1-28 (MDPCECSKGGTCNCGGSCTCTNCSCTTC). 20 residues coordinate a divalent metal cation: cysteine 4, cysteine 6, cysteine 12, cysteine 14, cysteine 18, cysteine 20, cysteine 23, cysteine 25, cysteine 28, cysteine 32, cysteine 33, cysteine 35, cysteine 36, cysteine 40, cysteine 43, cysteine 47, cysteine 49, cysteine 54, cysteine 58, and cysteine 59. The alpha stretch occupies residues 29-60 (KKSCCPCCPSGCPKCASGCVCKGKTCDAACCQ).

This sequence belongs to the metallothionein superfamily. Type 1 family.

In terms of biological role, metallothioneins have a high content of cysteine residues that bind various heavy metals. This is Metallothionein (mt) from Perca fluviatilis (European perch).